Consider the following 102-residue polypeptide: Small ribosomal subunit protein uS10 (102 aa).

The protein belongs to the universal ribosomal protein uS10 family. As to quaternary structure, part of the 30S ribosomal subunit.

Its function is as follows. Involved in the binding of tRNA to the ribosomes. This chain is Small ribosomal subunit protein uS10, found in Finegoldia magna (strain ATCC 29328 / DSM 20472 / WAL 2508) (Peptostreptococcus magnus).